We begin with the raw amino-acid sequence, 327 residues long: MKEIKLNSDSLEIYEKSVSEKLNRNDFIKLWDLDLNDLLDISYNLKKLFNKEKIDLCSIMNAKSGICPENCIFCSQSKHNTSKIDTYGLKSKEEILKNAKSVEKYSNRFSIVVSGKTVTDLEFEKIIESIEEIQNKTKLRVCVSLGLLNKDKLKALKERNVRIHNNLETSENYFKNICTSHDYSEKIKVILEAKKIGLEMCSGGIFGMGETIEDRVDLFLDLKKLGVDSVALNLLNPIYGTKIYEKIKSGDISPINSTDALKSICIARIALPNKVIRLCGGREHVLKDMQKYSLLALDGLMIGNYLTTNGQNIQSDLKMIEEMGFER.

The 234-residue stretch at 49–282 folds into the Radical SAM core domain; sequence FNKEKIDLCS…NKVIRLCGGR (234 aa). Positions 67, 71, and 74 each coordinate [4Fe-4S] cluster. Ser110, Cys142, Cys201, and Arg277 together coordinate [2Fe-2S] cluster.

Belongs to the radical SAM superfamily. Biotin synthase family. Homodimer. [4Fe-4S] cluster is required as a cofactor. It depends on [2Fe-2S] cluster as a cofactor.

The catalysed reaction is (4R,5S)-dethiobiotin + (sulfur carrier)-SH + 2 reduced [2Fe-2S]-[ferredoxin] + 2 S-adenosyl-L-methionine = (sulfur carrier)-H + biotin + 2 5'-deoxyadenosine + 2 L-methionine + 2 oxidized [2Fe-2S]-[ferredoxin]. Its pathway is cofactor biosynthesis; biotin biosynthesis; biotin from 7,8-diaminononanoate: step 2/2. Its function is as follows. Catalyzes the conversion of dethiobiotin (DTB) to biotin by the insertion of a sulfur atom into dethiobiotin via a radical-based mechanism. The sequence is that of Biotin synthase from Methanococcus maripaludis (strain DSM 14266 / JCM 13030 / NBRC 101832 / S2 / LL).